The chain runs to 201 residues: Akirin-2 (201 aa).

S18 and S21 each carry phosphoserine. The Nuclear localization signal motif lies at 23–28 (KRRRCA). S55 is modified (phosphoserine). The short motif at 198–201 (SYVS) is the SYVS motif element.

It belongs to the akirin family. As to quaternary structure, homodimer. Interacts with IPO9; the interaction is direct. Associates with 20S and 26S proteasomes. Interacts with SMARCD1; promoting SWI/SNF complex recruitment. Interacts with NFKBIZ. Interacts with YWHAB. Post-translationally, polyubiquitinated. Polyubiquitination is dependent of UBR5 that extends pre-ubiquitinated AKIRIN2.

The protein localises to the nucleus. It is found in the cytoplasm. It localises to the membrane. In terms of biological role, molecular adapter that acts as a bridge between a variety of multiprotein complexes, and which is involved in embryonic development, immunity, myogenesis and brain development. Plays a key role in nuclear protein degradation by promoting import of proteasomes into the nucleus: directly binds to fully assembled 20S proteasomes at one end and to nuclear import receptor IPO9 at the other end, bridging them together and mediating the import of pre-assembled proteasome complexes through the nuclear pore. Involved in innate immunity by regulating the production of interleukin-6 (IL6) downstream of Toll-like receptor (TLR): acts by bridging the NF-kappa-B inhibitor NFKBIZ and the SWI/SNF complex, leading to promote induction of IL6. Also involved in adaptive immunity by promoting B-cell activation. Involved in brain development: required for the survival and proliferation of cerebral cortical progenitor cells. Involved in myogenesis: required for skeletal muscle formation and skeletal development, possibly by regulating expression of muscle differentiation factors. Also plays a role in facilitating interdigital tissue regression during limb development. The polypeptide is Akirin-2 (Mus musculus (Mouse)).